We begin with the raw amino-acid sequence, 89 residues long: MANIKSAIKRAKTSEKRRAHNASMKSAMRTAIKKFEALVELKDVEKAREAFIIASKKLDKAASKGLIHKNAASRQKSRLAKKLNSIQAS.

2 disordered regions span residues 1-25 and 69-89; these read MANI…ASMK and KNAA…IQAS. The span at 7-20 shows a compositional bias: basic residues; that stretch reads AIKRAKTSEKRRAH.

This sequence belongs to the bacterial ribosomal protein bS20 family.

Its function is as follows. Binds directly to 16S ribosomal RNA. The protein is Small ribosomal subunit protein bS20 of Geobacillus kaustophilus (strain HTA426).